We begin with the raw amino-acid sequence, 336 residues long: Probable allantoicase (336 aa).

It belongs to the allantoicase family.

The catalysed reaction is allantoate + H2O = (S)-ureidoglycolate + urea. It functions in the pathway nitrogen metabolism; (S)-allantoin degradation; (S)-ureidoglycolate from allantoate (aminidohydrolase route): step 1/1. This Acinetobacter baumannii (strain AYE) protein is Probable allantoicase.